We begin with the raw amino-acid sequence, 274 residues long: Cytochrome b-c1 complex subunit Rieske, mitochondrial (274 aa).

Residues 79–103 are Mitochondrial matrix-facing; it reads SHTDVRVPDFSEYRRLEVLDSTKSS. A helical membrane pass occupies residues 104-140; the sequence is RESSEARKGFSYLVTGVTTVGVAYAAKNVVTQFVSSM. Residues 141-274 lie on the Mitochondrial intermembrane side of the membrane; the sequence is SASADVLALA…FTSDDMVIVG (134 aa). The Rieske domain maps to 187 to 272; the sequence is EAAVELSQLR…YEFTSDDMVI (86 aa). Residues cysteine 217, histidine 219, cysteine 236, histidine 239, and serine 241 each contribute to the [2Fe-2S] cluster site. A disulfide bridge links cysteine 222 with cysteine 238.

It belongs to the Rieske iron-sulfur protein family. In terms of assembly, component of the ubiquinol-cytochrome c oxidoreductase (cytochrome b-c1 complex, complex III, CIII), a multisubunit enzyme composed of 11 subunits. The complex is composed of 3 respiratory subunits cytochrome b, cytochrome c1 and Rieske protein UQCRFS1, 2 core protein subunits UQCRC1/QCR1 and UQCRC2/QCR2, and 6 low-molecular weight protein subunits UQCRH/QCR6, UQCRB/QCR7, UQCRQ/QCR8, UQCR10/QCR9, UQCR11/QCR10 and subunit 9, the cleavage product of Rieske protein UQCRFS1. The complex exists as an obligatory dimer and forms supercomplexes (SCs) in the inner mitochondrial membrane with NADH-ubiquinone oxidoreductase (complex I, CI) and cytochrome c oxidase (complex IV, CIV), resulting in different assemblies (supercomplex SCI(1)III(2)IV(1) and megacomplex MCI(2)III(2)IV(2)). Incorporation of the Rieske protein UQCRFS1 is the penultimate step in complex III assembly. Interacts with TTC19, which is involved in the clearance of UQCRFS1 fragments. As to quaternary structure, component of the ubiquinol-cytochrome c oxidoreductase (cytochrome b-c1 complex, complex III, CIII). Subunit 9 corresponds to the mitochondrial targeting sequence (MTS) of Rieske protein UQCRFS1. It is retained after processing and incorporated inside complex III, where it remains bound to the complex and localizes between the 2 core subunits UQCRC1/QCR1 and UQCRC2/QCR2. [2Fe-2S] cluster is required as a cofactor. In terms of processing, proteolytic processing is necessary for the correct insertion of UQCRFS1 in the complex III dimer. Several fragments are generated during UQCRFS1 insertion, most probably due to the endogenous matrix-processing peptidase (MPP) activity of the 2 core protein subunits UQCRC1/QCR1 and UQCRC2/QCR2, which are homologous to the 2 mitochondrial-processing peptidase (MPP) subunits beta-MPP and alpha-MPP respectively. The action of the protease is also necessary for the clearance of the UQCRFS1 fragments.

Its subcellular location is the mitochondrion inner membrane. It carries out the reaction a quinol + 2 Fe(III)-[cytochrome c](out) = a quinone + 2 Fe(II)-[cytochrome c](out) + 2 H(+)(out). Its function is as follows. Component of the ubiquinol-cytochrome c oxidoreductase, a multisubunit transmembrane complex that is part of the mitochondrial electron transport chain which drives oxidative phosphorylation. The respiratory chain contains 3 multisubunit complexes succinate dehydrogenase (complex II, CII), ubiquinol-cytochrome c oxidoreductase (cytochrome b-c1 complex, complex III, CIII) and cytochrome c oxidase (complex IV, CIV), that cooperate to transfer electrons derived from NADH and succinate to molecular oxygen, creating an electrochemical gradient over the inner membrane that drives transmembrane transport and the ATP synthase. The cytochrome b-c1 complex catalyzes electron transfer from ubiquinol to cytochrome c, linking this redox reaction to translocation of protons across the mitochondrial inner membrane, with protons being carried across the membrane as hydrogens on the quinol. In the process called Q cycle, 2 protons are consumed from the matrix, 4 protons are released into the intermembrane space and 2 electrons are passed to cytochrome c. The Rieske protein is a catalytic core subunit containing a [2Fe-2S] iron-sulfur cluster. It cycles between 2 conformational states during catalysis to transfer electrons from the quinol bound in the Q(0) site in cytochrome b to cytochrome c1. Incorporation of UQCRFS1 is the penultimate step in complex III assembly. Component of the ubiquinol-cytochrome c oxidoreductase (cytochrome b-c1 complex, complex III, CIII). UQCRFS1 undergoes proteolytic processing once it is incorporated in the complex III dimer. One of the fragments, called subunit 9, corresponds to its mitochondrial targeting sequence (MTS). The proteolytic processing is necessary for the correct insertion of UQCRFS1 in the complex III dimer, but the persistence of UQCRFS1-derived fragments may prevent newly imported UQCRFS1 to be processed and assembled into complex III and is detrimental for the complex III structure and function. The polypeptide is Cytochrome b-c1 complex subunit Rieske, mitochondrial (UQCRFS1) (Pongo pygmaeus (Bornean orangutan)).